The sequence spans 284 residues: Avenin-like b6 (284 aa).

Positions 1–18 (MKVFILALLALAATTAIA) are cleaved as a signal peptide.

This sequence belongs to the prolamin family. In terms of processing, contains disulfide bonds.

Seed storage protein. Might be integrated via inter-chain disulfide bonds within the glutenin polymer. The sequence is that of Avenin-like b6 from Triticum aestivum (Wheat).